Here is a 127-residue protein sequence, read N- to C-terminus: uncharacterized protein (127 aa).

Residues 1–17 show a composition bias toward polar residues; it reads MQGSVQIQKGNISSSYT. The tract at residues 1-36 is disordered; the sequence is MQGSVQIQKGNISSSYTPEKHPSHPTSANGSMSPKR.

This is an uncharacterized protein from Treponema pallidum (strain Nichols).